We begin with the raw amino-acid sequence, 101 residues long: NAD(P)H-quinone oxidoreductase subunit 4L, chloroplastic (101 aa).

The next 3 membrane-spanning stretches (helical) occupy residues 2 to 22 (MLEH…YGLI), 32 to 52 (MCLE…SDFF), and 61 to 81 (IFSI…LAIV).

The protein belongs to the complex I subunit 4L family. In terms of assembly, NDH is composed of at least 16 different subunits, 5 of which are encoded in the nucleus.

It localises to the plastid. The protein resides in the chloroplast thylakoid membrane. The enzyme catalyses a plastoquinone + NADH + (n+1) H(+)(in) = a plastoquinol + NAD(+) + n H(+)(out). The catalysed reaction is a plastoquinone + NADPH + (n+1) H(+)(in) = a plastoquinol + NADP(+) + n H(+)(out). NDH shuttles electrons from NAD(P)H:plastoquinone, via FMN and iron-sulfur (Fe-S) centers, to quinones in the photosynthetic chain and possibly in a chloroplast respiratory chain. The immediate electron acceptor for the enzyme in this species is believed to be plastoquinone. Couples the redox reaction to proton translocation, and thus conserves the redox energy in a proton gradient. The polypeptide is NAD(P)H-quinone oxidoreductase subunit 4L, chloroplastic (Helianthus annuus (Common sunflower)).